An 89-amino-acid polypeptide reads, in one-letter code: Small ribosomal subunit protein uS15 (89 aa).

Belongs to the universal ribosomal protein uS15 family. As to quaternary structure, part of the 30S ribosomal subunit. Forms a bridge to the 50S subunit in the 70S ribosome, contacting the 23S rRNA.

Functionally, one of the primary rRNA binding proteins, it binds directly to 16S rRNA where it helps nucleate assembly of the platform of the 30S subunit by binding and bridging several RNA helices of the 16S rRNA. In terms of biological role, forms an intersubunit bridge (bridge B4) with the 23S rRNA of the 50S subunit in the ribosome. This is Small ribosomal subunit protein uS15 from Chlorobium phaeobacteroides (strain DSM 266 / SMG 266 / 2430).